Here is a 155-residue protein sequence, read N- to C-terminus: Small ribosomal subunit protein uS7c (155 aa).

The protein belongs to the universal ribosomal protein uS7 family. In terms of assembly, part of the 30S ribosomal subunit.

The protein localises to the plastid. The protein resides in the chloroplast. Its function is as follows. One of the primary rRNA binding proteins, it binds directly to 16S rRNA where it nucleates assembly of the head domain of the 30S subunit. The protein is Small ribosomal subunit protein uS7c (rps7) of Lactoris fernandeziana.